The following is a 783-amino-acid chain: Rho GTPase-activating protein gacR (783 aa).

Residues 138 to 188 (AKNRFDKARLSFDEASEQFKQLRKKQNNINNEKLLEAEEDLDYATQQFSDI) adopt a coiled-coil conformation. The tract at residues 262-299 (QFEQTNSSRTISLPPPPPPKPTSSTPSSSPSPSPSSSI) is disordered. A compositionally biased stretch (low complexity) spans 283–299 (TSSTPSSSPSPSPSSSI). Residues 319–509 (MALSTITERE…FIISNFNNIF (191 aa)) form the Rho-GAP domain. The span at 527 to 539 (GSSGGGGGGGSSG) shows a compositional bias: gly residues. Positions 527 to 745 (GSSGGGGGGG…TTNSRPLSNS (219 aa)) are disordered. 4 stretches are compositionally biased toward low complexity: residues 568–589 (SVNT…ASSA), 599–630 (PSSS…NINP), 641–651 (PKKISSSSNSL), and 661–698 (SIPE…RSST). Residues 706 to 738 (NRVSMYLQNSNTGVPLPSQKPQRVISNNNTTTN) show a composition bias toward polar residues.

The protein resides in the cytoplasm. Rho GTPase-activating protein involved in the signal transduction pathway. This chain is Rho GTPase-activating protein gacR (gacR), found in Dictyostelium discoideum (Social amoeba).